Consider the following 489-residue polypeptide: Glutamate--tRNA ligase (489 aa).

The 'HIGH' region motif lies at 11-21 (PSPTGHLHIGG). The 'KMSKS' region motif lies at 253–257 (KLSKR). Lys256 contributes to the ATP binding site.

It belongs to the class-I aminoacyl-tRNA synthetase family. Glutamate--tRNA ligase type 1 subfamily. As to quaternary structure, monomer.

It localises to the cytoplasm. The catalysed reaction is tRNA(Glu) + L-glutamate + ATP = L-glutamyl-tRNA(Glu) + AMP + diphosphate. Functionally, catalyzes the attachment of glutamate to tRNA(Glu) in a two-step reaction: glutamate is first activated by ATP to form Glu-AMP and then transferred to the acceptor end of tRNA(Glu). The polypeptide is Glutamate--tRNA ligase (Geobacillus stearothermophilus (Bacillus stearothermophilus)).